A 175-amino-acid chain; its full sequence is Crossover junction endodeoxyribonuclease RuvC (175 aa).

Catalysis depends on residues Asp8, Glu67, and Asp139. The Mg(2+) site is built by Asp8, Glu67, and Asp139.

Belongs to the RuvC family. As to quaternary structure, homodimer which binds Holliday junction (HJ) DNA. The HJ becomes 2-fold symmetrical on binding to RuvC with unstacked arms; it has a different conformation from HJ DNA in complex with RuvA. In the full resolvosome a probable DNA-RuvA(4)-RuvB(12)-RuvC(2) complex forms which resolves the HJ. The cofactor is Mg(2+).

Its subcellular location is the cytoplasm. The enzyme catalyses Endonucleolytic cleavage at a junction such as a reciprocal single-stranded crossover between two homologous DNA duplexes (Holliday junction).. Functionally, the RuvA-RuvB-RuvC complex processes Holliday junction (HJ) DNA during genetic recombination and DNA repair. Endonuclease that resolves HJ intermediates. Cleaves cruciform DNA by making single-stranded nicks across the HJ at symmetrical positions within the homologous arms, yielding a 5'-phosphate and a 3'-hydroxyl group; requires a central core of homology in the junction. The consensus cleavage sequence is 5'-(A/T)TT(C/G)-3'. Cleavage occurs on the 3'-side of the TT dinucleotide at the point of strand exchange. HJ branch migration catalyzed by RuvA-RuvB allows RuvC to scan DNA until it finds its consensus sequence, where it cleaves and resolves the cruciform DNA. This is Crossover junction endodeoxyribonuclease RuvC from Marinobacter nauticus (strain ATCC 700491 / DSM 11845 / VT8) (Marinobacter aquaeolei).